Consider the following 246-residue polypeptide: Anamorsin homolog (246 aa).

Residues 1–124 (MRVVVVDLDG…ARGTAFSLKS (124 aa)) form an N-terminal SAM-like domain region. Residues 125-158 (RAVRVVTADAGWGADADVDDELIDESALLTELDV) are linker. Positions 168, 177, 180, and 182 each coordinate [2Fe-2S] cluster. The tract at residues 168-182 (CDVGAGKKACKNCTC) is fe-S binding site A. [4Fe-4S] cluster-binding residues include Cys-206, Cys-209, Cys-217, and Cys-220. Short sequence motifs (cx2C motif) lie at residues 206–209 (CGNC) and 217–220 (CAGC). The interval 206-220 (CGNCALGDAFRCAGC) is fe-S binding site B.

Belongs to the anamorsin family. As to quaternary structure, monomer. The cofactor is [2Fe-2S] cluster. [4Fe-4S] cluster is required as a cofactor.

The protein localises to the cytoplasm. The protein resides in the mitochondrion intermembrane space. Functionally, component of the cytosolic iron-sulfur (Fe-S) protein assembly (CIA) machinery. Required for the maturation of extramitochondrial Fe-S proteins. Part of an electron transfer chain functioning in an early step of cytosolic Fe-S biogenesis, facilitating the de novo assembly of a [4Fe-4S] cluster on the cytosolic Fe-S scaffold complex. Electrons are transferred from NADPH via a FAD- and FMN-containing diflavin oxidoreductase. Together with the diflavin oxidoreductase, also required for the assembly of the diferric tyrosyl radical cofactor of ribonucleotide reductase (RNR), probably by providing electrons for reduction during radical cofactor maturation in the catalytic small subunit. The polypeptide is Anamorsin homolog (Ostreococcus tauri).